The sequence spans 1330 residues: Kinectin (1330 aa).

At 1 to 6 the chain is on the cytoplasmic side; it reads MEFYES. Residues 7 to 29 form a helical; Signal-anchor for type II membrane protein membrane-spanning segment; sequence TYFIVLIPSVVITVIFLFFWLFM. Residues 30 to 1330 are Lumenal-facing; that stretch reads KETLYDEVLA…KEKEHYQVLE (1301 aa). Disordered regions lie at residues 49–81 and 108–218; these read PTKT…ESVP and SSSV…KQKA. A phosphoserine mark is found at S75 and S77. Residues 113 to 122 are compositionally biased toward basic residues; it reads ERKKKEKKHK. Residues 123 to 135 are compositionally biased toward basic and acidic residues; the sequence is PVLEEQVTKESDV. A Phosphothreonine modification is found at T153. Position 156 is a phosphoserine (S156). A compositionally biased stretch (basic residues) spans 161-171; that stretch reads SKKKPGQKKSK. Residues N172, N435, N772, N904, and N1055 are each glycosylated (N-linked (GlcNAc...) asparagine). A compositionally biased stretch (basic and acidic residues) spans 172-182; that stretch reads NGSDDQDKKVE. Residues 332–1329 are a coiled coil; sequence HQLQEKDKLL…TKEKEHYQVL (998 aa). S1085 carries the phosphoserine modification. N1236 is a glycosylation site (N-linked (GlcNAc...) asparagine). At S1286 the chain carries Phosphoserine. The N-linked (GlcNAc...) asparagine glycan is linked to N1302.

This sequence belongs to the kinectin family. In terms of assembly, parallel homodimers formed between the membrane-bound and the cytosolic form, and also between 2 cytosolic forms. In terms of tissue distribution, expressed in male brain, heart, kidney, liver, lung, spleen and testis.

The protein resides in the endoplasmic reticulum membrane. Functionally, receptor for kinesin thus involved in kinesin-driven vesicle motility. The polypeptide is Kinectin (KTN1) (Vulpes vulpes (Red fox)).